Here is a 1670-residue protein sequence, read N- to C-terminus: DNA-directed RNA polymerase I subunit 1 (1670 aa).

Residues C79, C82, C89, H92, C119, and C122 each contribute to the Zn(2+) site. A disordered region spans residues 154–185 (ESNTPTKSKSSDESCESVVTTDSSEECEDSDV). Over residues 176-185 (SSEECEDSDV) the composition is skewed to acidic residues. Zn(2+)-binding residues include C213 and C216. The disordered stretch occupies residues 255–293 (TSSVENPDGFDDSGIDALSEVEDGDKETREKSTEVAAEF). The span at 262–279 (DGFDDSGIDALSEVEDGD) shows a compositional bias: acidic residues. Residues 280 to 293 (KETREKSTEVAAEF) are compositionally biased toward basic and acidic residues. Mg(2+) is bound by residues D602, D604, and D606. The interval 1005-1017 (PQEYYFHCMAGRE) is bridging helix. Positions 1318–1437 (TGPIAGNETD…EQSKKKRRKF (120 aa)) are disordered. Acidic residues-rich tracts occupy residues 1339–1354 (DDGD…DDLG), 1366–1379 (DEMD…DETN), and 1388–1399 (EDPEMDSENEDT). Over residues 1415-1429 (EPQKEVKGVKNVKEQ) the composition is skewed to basic and acidic residues.

This sequence belongs to the RNA polymerase beta' chain family. As to quaternary structure, component of the RNA polymerase I (Pol I) complex consisting of at least 13 subunits.

The protein localises to the nucleus. It carries out the reaction RNA(n) + a ribonucleoside 5'-triphosphate = RNA(n+1) + diphosphate. Its function is as follows. DNA-dependent RNA polymerase catalyzes the transcription of DNA into RNA using the four ribonucleoside triphosphates as substrates. Largest and catalytic core component of RNA polymerase I which synthesizes ribosomal RNA precursors. Forms the polymerase active center together with the second largest subunit. A single stranded DNA template strand of the promoter is positioned within the central active site cleft of Pol I. A bridging helix emanates from NRPA1 and crosses the cleft near the catalytic site and is thought to promote translocation of Pol I by acting as a ratchet that moves the RNA-DNA hybrid through the active site by switching from straight to bent conformations at each step of nucleotide addition. The protein is DNA-directed RNA polymerase I subunit 1 of Arabidopsis thaliana (Mouse-ear cress).